Consider the following 325-residue polypeptide: Glutarate 2-hydroxylase (325 aa).

Fe cation-binding residues include H160, D162, and H292.

The protein belongs to the glutarate hydroxylase family. In terms of assembly, homotetramer. The cofactor is Fe(2+).

The catalysed reaction is glutarate + 2-oxoglutarate + O2 = (S)-2-hydroxyglutarate + succinate + CO2. The protein operates within amino-acid degradation. In terms of biological role, acts as an alpha-ketoglutarate-dependent dioxygenase catalyzing hydroxylation of glutarate (GA) to L-2-hydroxyglutarate (L2HG). Functions in a L-lysine degradation pathway that proceeds via cadaverine, glutarate and L-2-hydroxyglutarate. In Escherichia fergusonii (strain ATCC 35469 / DSM 13698 / CCUG 18766 / IAM 14443 / JCM 21226 / LMG 7866 / NBRC 102419 / NCTC 12128 / CDC 0568-73), this protein is Glutarate 2-hydroxylase.